A 141-amino-acid polypeptide reads, in one-letter code: Hemoglobin subunit alpha-A (141 aa).

The Globin domain occupies 1 to 141 (VLSSHDKSNV…VGTVLTAKYR (141 aa)). H58 is an O2 binding site. H87 is a heme b binding site.

The protein belongs to the globin family. In terms of assembly, heterotetramer of two alpha chains and two beta chains. In terms of tissue distribution, red blood cells.

Functionally, involved in oxygen transport from the lung to the various peripheral tissues. This chain is Hemoglobin subunit alpha-A (HBAA), found in Phoenicopterus ruber (American flamingo).